The sequence spans 226 residues: Peroxynitrite isomerase (226 aa).

A GXWXGXG motif is present at residues 21-27 (GSWEGQG). H191 provides a ligand contact to heme b. The segment at 201 to 226 (SAAEGRLAPGAERPRGAGGRKQGEQS) is disordered.

The protein belongs to the nitrobindin family. As to quaternary structure, homodimer. The cofactor is heme b.

It carries out the reaction peroxynitrite = nitrate. Its pathway is nitrogen metabolism. Functionally, heme-binding protein able to scavenge peroxynitrite and to protect free L-tyrosine against peroxynitrite-mediated nitration, by acting as a peroxynitrite isomerase that converts peroxynitrite to nitrate. Therefore, this protein likely plays a role in peroxynitrite sensing and in the detoxification of reactive nitrogen and oxygen species (RNS and ROS, respectively). Is able to bind nitric oxide (NO) in vitro, but may act as a sensor of peroxynitrite levels in vivo. This Micrococcus luteus (strain ATCC 4698 / DSM 20030 / JCM 1464 / CCM 169 / CCUG 5858 / IAM 1056 / NBRC 3333 / NCIMB 9278 / NCTC 2665 / VKM Ac-2230) (Micrococcus lysodeikticus) protein is Peroxynitrite isomerase.